Reading from the N-terminus, the 486-residue chain is Glutamate--tRNA ligase (486 aa).

Residues Pro-11–Asn-21 carry the 'HIGH' region motif. Residues Lys-255–Arg-259 carry the 'KMSKS' region motif. Lys-258 is a binding site for ATP.

Belongs to the class-I aminoacyl-tRNA synthetase family. Glutamate--tRNA ligase type 1 subfamily. In terms of assembly, monomer.

Its subcellular location is the cytoplasm. It carries out the reaction tRNA(Glu) + L-glutamate + ATP = L-glutamyl-tRNA(Glu) + AMP + diphosphate. In terms of biological role, catalyzes the attachment of glutamate to tRNA(Glu) in a two-step reaction: glutamate is first activated by ATP to form Glu-AMP and then transferred to the acceptor end of tRNA(Glu). The sequence is that of Glutamate--tRNA ligase from Streptococcus pneumoniae (strain ATCC BAA-255 / R6).